A 157-amino-acid polypeptide reads, in one-letter code: Transcription elongation factor GreA (157 aa).

A coiled-coil region spans residues 14–37; that stretch reads LREELDRLLKLRPKITEAIAEARE.

This sequence belongs to the GreA/GreB family.

Functionally, necessary for efficient RNA polymerase transcription elongation past template-encoded arresting sites. The arresting sites in DNA have the property of trapping a certain fraction of elongating RNA polymerases that pass through, resulting in locked ternary complexes. Cleavage of the nascent transcript by cleavage factors such as GreA or GreB allows the resumption of elongation from the new 3'terminus. GreA releases sequences of 2 to 3 nucleotides. The chain is Transcription elongation factor GreA from Vibrio cholerae serotype O1 (strain ATCC 39315 / El Tor Inaba N16961).